The primary structure comprises 491 residues: Carbohydrate ABC transporter substrate-binding protein (491 aa).

4 residues coordinate Zn(2+): Asp212, His247, His252, and Glu256.

This sequence belongs to the bacterial solute-binding protein 1 family. In terms of assembly, exists as a monomer, homodimer, homotrimer and homotetramer; oligomerization increases with higher protein concentration.

It is found in the cell surface. Functionally, probably part of an ABC transporter complex involved in carbohydrate transport. The sequence is that of Carbohydrate ABC transporter substrate-binding protein from Streptococcus pneumoniae serotype 4 (strain ATCC BAA-334 / TIGR4).